We begin with the raw amino-acid sequence, 251 residues long: Triosephosphate isomerase (251 aa).

9–11 provides a ligand contact to substrate; that stretch reads NWK. The active-site Electrophile is the His-95. Glu-167 serves as the catalytic Proton acceptor. Residues Gly-173, Ser-212, and 233–234 each bind substrate; that span reads GG.

Belongs to the triosephosphate isomerase family. As to quaternary structure, homodimer.

The protein resides in the cytoplasm. It carries out the reaction D-glyceraldehyde 3-phosphate = dihydroxyacetone phosphate. It functions in the pathway carbohydrate biosynthesis; gluconeogenesis. Its pathway is carbohydrate degradation; glycolysis; D-glyceraldehyde 3-phosphate from glycerone phosphate: step 1/1. Involved in the gluconeogenesis. Catalyzes stereospecifically the conversion of dihydroxyacetone phosphate (DHAP) to D-glyceraldehyde-3-phosphate (G3P). The chain is Triosephosphate isomerase from Pseudomonas fluorescens (strain Pf0-1).